Reading from the N-terminus, the 197-residue chain is Translation machinery-associated protein 22 (197 aa).

The region spanning 102–173 is the SUI1 domain; the sequence is VQIKRVERNK…DVKEWLLEVY (72 aa).

This sequence belongs to the DENR family. Interacts with the 40S ribosomal subunit.

The protein localises to the cytoplasm. In Aspergillus niger (strain ATCC MYA-4892 / CBS 513.88 / FGSC A1513), this protein is Translation machinery-associated protein 22 (tma22).